Consider the following 367-residue polypeptide: 4-hydroxy-3-methylbut-2-en-1-yl diphosphate synthase (flavodoxin) (367 aa).

The [4Fe-4S] cluster site is built by cysteine 265, cysteine 268, cysteine 300, and glutamate 307.

This sequence belongs to the IspG family. It depends on [4Fe-4S] cluster as a cofactor.

The catalysed reaction is (2E)-4-hydroxy-3-methylbut-2-enyl diphosphate + oxidized [flavodoxin] + H2O + 2 H(+) = 2-C-methyl-D-erythritol 2,4-cyclic diphosphate + reduced [flavodoxin]. The protein operates within isoprenoid biosynthesis; isopentenyl diphosphate biosynthesis via DXP pathway; isopentenyl diphosphate from 1-deoxy-D-xylulose 5-phosphate: step 5/6. Functionally, converts 2C-methyl-D-erythritol 2,4-cyclodiphosphate (ME-2,4cPP) into 1-hydroxy-2-methyl-2-(E)-butenyl 4-diphosphate. The polypeptide is 4-hydroxy-3-methylbut-2-en-1-yl diphosphate synthase (flavodoxin) (Bacillus cereus (strain ATCC 10987 / NRS 248)).